The chain runs to 198 residues: NADH-quinone oxidoreductase subunit B (198 aa).

4 residues coordinate [4Fe-4S] cluster: C62, C63, C128, and C158.

Belongs to the complex I 20 kDa subunit family. NDH-1 is composed of 14 different subunits. Subunits NuoB, C, D, E, F, and G constitute the peripheral sector of the complex. [4Fe-4S] cluster is required as a cofactor.

It localises to the cell inner membrane. The catalysed reaction is a quinone + NADH + 5 H(+)(in) = a quinol + NAD(+) + 4 H(+)(out). Its function is as follows. NDH-1 shuttles electrons from NADH, via FMN and iron-sulfur (Fe-S) centers, to quinones in the respiratory chain. The immediate electron acceptor for the enzyme in this species is believed to be a menaquinone. Couples the redox reaction to proton translocation (for every two electrons transferred, four hydrogen ions are translocated across the cytoplasmic membrane), and thus conserves the redox energy in a proton gradient. The polypeptide is NADH-quinone oxidoreductase subunit B (Phocaeicola vulgatus (strain ATCC 8482 / DSM 1447 / JCM 5826 / CCUG 4940 / NBRC 14291 / NCTC 11154) (Bacteroides vulgatus)).